The sequence spans 252 residues: Aquaporin TIP4-4 (252 aa).

2 consecutive transmembrane segments (helical) span residues 20–40 (AVLAELILTFLFVFAGVGSAM) and 53–73 (VVGLTAVALAHTLVVAVMVSA). Positions 83–85 (NPA) match the NPA 1 motif. The next 3 membrane-spanning stretches (helical) occupy residues 105-125 (VAAQLLGSTLACLLLAFLAVA), 143-163 (GVLMEAVLTFSLLFAVYATVV), and 168-188 (AVGGMGPLLVGLVVGANVLAG). The NPA 2 motif lies at 197 to 199 (NPA). Residues 216-236 (VYWVGPLIGGPLAGLVYDGLF) traverse the membrane as a helical segment.

This sequence belongs to the MIP/aquaporin (TC 1.A.8) family. TIP (TC 1.A.8.10) subfamily.

The protein resides in the vacuole membrane. Aquaporins facilitate the transport of water and small neutral solutes across cell membranes. This chain is Aquaporin TIP4-4 (TIP4-4), found in Zea mays (Maize).